The primary structure comprises 63 residues: Large ribosomal subunit protein bL32c (63 aa).

The interval 38–63 (RSFSGVSEHPKPKGFSRQQTNNRVLG) is disordered. Residues 53–63 (SRQQTNNRVLG) show a composition bias toward polar residues.

The protein belongs to the bacterial ribosomal protein bL32 family.

It is found in the plastid. Its subcellular location is the chloroplast. This Oryza sativa (Rice) protein is Large ribosomal subunit protein bL32c (rpl32).